The following is a 57-amino-acid chain: UPF0391 membrane protein XOO1885 (57 aa).

The next 2 helical transmembrane spans lie at 4-24 (WAII…GGMA) and 33-53 (FLFW…MTIA).

The protein belongs to the UPF0391 family.

Its subcellular location is the cell membrane. In Xanthomonas oryzae pv. oryzae (strain KACC10331 / KXO85), this protein is UPF0391 membrane protein XOO1885.